The chain runs to 35 residues: Delta-theraphotoxin-Hm1a (35 aa).

Cystine bridges form between cysteine 2–cysteine 16, cysteine 9–cysteine 21, and cysteine 15–cysteine 28.

The protein belongs to the neurotoxin 10 (Hwtx-1) family. 09 (HaTx) subfamily. As to expression, expressed by the venom gland.

The protein resides in the secreted. Its function is as follows. Gating-modifier toxin that potently inhibits inactivation of the mammalian Nav1.1/SCN1A sodium channel (EC(50)=38 nM). Also moderately inhibits inactivation of Nav1.2/SCN2A (EC(50)=236 nM) and Nav1.3/SCN3A (EC(50)=220 nM) when the channels are expressed in oocytes without the beta-1 auxiliary subunit. Does not inhibit inactivation of Nav1.2/SCN2A when the channel is coexpressed with the beta-1 auxiliary subunit. When tested on Nav1.1/SCN1A channel, it enhances peak current amplitude and potently delays channel inactivation in a dose-dependent manner, leading to a large sustained current. It has no effect on the voltage-dependence of steady-state activation, and induces a depolarizing shift in the voltage dependence of inactivation. In addition, it does not modify the recovery from fast inactivation in Nav1.1/SCN1A. The binding affinity and subtype selectivity of the toxin towards Nav1.1/SCN1A channel is determined by residues within both the S1-S2 and S3-S4 loops of the domain IV voltage sensor of the channel. This toxin also weakly inhibits several subtypes of voltage-gated potassium channels. It moderately blocks Kv2.1/KCNB1 (23% inhibition at 100 nM), Kv2.2/KCNB2 (19.7% at 100 nM and 51% at 300 nM), Kv4.1/KCND1 (IC(50)=280 nM), Kv4.2/KCND2 (39% at 300 nM) and Kv4.3/KCND3 (43% at 300 nM). In vivo, intracerebroventricular injection into mice elicits convulsions, spasms, tremors and rapid death. When injected into mouse hindpaw, the toxin elicits an immediate and robust response to pain. However, intraplantar injection of toxin does not cause neurogenic inflammation or alter sensitivity to heat, indicative of a modality-specific effect on mechanosensitive neurons. In Dravet syndrome mice model, intracerebroventricular infusion of this peptide rescues mice from seizures and premature death. The polypeptide is Delta-theraphotoxin-Hm1a (Heteroscodra maculata (Togo starburst tarantula)).